Reading from the N-terminus, the 527-residue chain is Heat shock factor protein HSF8 (527 aa).

The DNA-binding element occupies 39–133 (PFLVKTYDMV…KSISRRKPAH (95 aa)). Disordered stretches follow at residues 128-158 (RRKP…HSAS), 241-273 (NESN…ADGQ), and 297-341 (SSPR…TSGK). Residues 134-152 (GHAQQQQQPHGNAQQQMQP) show a composition bias toward low complexity. Over residues 317 to 326 (SPQSNASSGR) the composition is skewed to polar residues.

The protein belongs to the HSF family. As to quaternary structure, homotrimer. Exhibits temperature-dependent phosphorylation.

Its subcellular location is the nucleus. In terms of biological role, DNA-binding protein that specifically binds heat shock promoter elements (HSE) and activates transcription. The sequence is that of Heat shock factor protein HSF8 (HSF8) from Solanum lycopersicum (Tomato).